Consider the following 423-residue polypeptide: Riboflavin biosynthesis protein RibBA (423 aa).

Residues Met-1–Lys-204 form a DHBP synthase region. Residues Arg-28 to Glu-29, Asp-33, Arg-141 to Thr-145, and Glu-165 contribute to the D-ribulose 5-phosphate site. Residue Glu-29 coordinates Mg(2+). A Mg(2+)-binding site is contributed by His-144. Residues His-205–Val-423 form a GTP cyclohydrolase II region. Arg-259 to Glu-263 serves as a coordination point for GTP. Positions 264, 275, and 277 each coordinate Zn(2+). GTP-binding positions include Gln-280, Glu-303 to Arg-305, and Thr-325. The active-site Proton acceptor; for GTP cyclohydrolase activity is Asp-337. Arg-339 serves as the catalytic Nucleophile; for GTP cyclohydrolase activity. The GTP site is built by Thr-360 and Lys-365.

The protein in the N-terminal section; belongs to the DHBP synthase family. It in the C-terminal section; belongs to the GTP cyclohydrolase II family. Mg(2+) is required as a cofactor. Requires Mn(2+) as cofactor. It depends on Zn(2+) as a cofactor.

The enzyme catalyses D-ribulose 5-phosphate = (2S)-2-hydroxy-3-oxobutyl phosphate + formate + H(+). The catalysed reaction is GTP + 4 H2O = 2,5-diamino-6-hydroxy-4-(5-phosphoribosylamino)-pyrimidine + formate + 2 phosphate + 3 H(+). Its pathway is cofactor biosynthesis; riboflavin biosynthesis; 2-hydroxy-3-oxobutyl phosphate from D-ribulose 5-phosphate: step 1/1. The protein operates within cofactor biosynthesis; riboflavin biosynthesis; 5-amino-6-(D-ribitylamino)uracil from GTP: step 1/4. In terms of biological role, catalyzes the conversion of D-ribulose 5-phosphate to formate and 3,4-dihydroxy-2-butanone 4-phosphate. Its function is as follows. Catalyzes the conversion of GTP to 2,5-diamino-6-ribosylamino-4(3H)-pyrimidinone 5'-phosphate (DARP), formate and pyrophosphate. The chain is Riboflavin biosynthesis protein RibBA from Mycolicibacterium gilvum (strain PYR-GCK) (Mycobacterium gilvum (strain PYR-GCK)).